The primary structure comprises 88 residues: FAD assembly factor SdhE (88 aa).

The protein belongs to the SdhE FAD assembly factor family. In terms of assembly, monomer. Makes weak or transient interactions with SdhA. Interacts with YgfX. Interacts with FrdA.

It is found in the cytoplasm. Its pathway is antibiotic biosynthesis; prodigiosin biosynthesis. Its function is as follows. An FAD assembly protein, which accelerates covalent attachment of the cofactor into other proteins. Plays an essential role in the assembly of succinate dehydrogenase (SDH, respiratory complex II), an enzyme complex that is a component of both the tricarboxylic acid cycle and the electron transport chain, and which couples the oxidation of succinate to fumarate with the reduction of ubiquinone (coenzyme Q) to ubiquinol. Required for flavinylation (covalent attachment of FAD) of the flavoprotein subunit SdhA of SDH. Required for flavinylation of the flavoprotein subunit FrdA of fumarate reductase (FRD). Flavinylation of SDH and FRD occurs in a similar but not identical manner, as site-specific mutations display subtle differences between them. Flavinylates SdhA in vivo in the absence of the other SDH subunits; SdhE mutants that do not flavinylate also interfere with wild-type activity in a possible dominant-negative fashion. Weakly binds to FAD and facilitates its binding to SdhA. Required for production of prodigiosin antibiotic (Pig); overproduction of SdhE in a deletion mutant leads to decreased synthesis of Pig compared to wild-type. Capable of flavinylating A.pasteurianus SdhA when the SDH operon and this gene are expressed in G.oxydans; flavinylation of SdhA is detected only in the presence of sdhE. In Serratia sp. (strain ATCC 39006) (Prodigiosinella confusarubida), this protein is FAD assembly factor SdhE.